We begin with the raw amino-acid sequence, 1648 residues long: eIF-2-alpha kinase GCN2 (1648 aa).

A disordered region spans residues 1–26 (MAGGRGASGRGRAEPQESYSQRQDHE). The RWD domain occupies 25–137 (HELQALEAIY…HHVQSFLSEH (113 aa)). Residues 146-205 (HEEMLERQAQEKQQRLLEARRKEEQEQREILHEIQRRKEEIKEEKKRKEMAKQERLEITS) are a coiled coil. Ser230 carries the phosphoserine modification. Protein kinase domains follow at residues 286–538 (VGSD…HSFI) and 589–1000 (FEEL…SELL). Residues 595 to 603 (LGKGAFGAV) and Lys618 each bind ATP. Positions 661–784 (PAVPGTPPPD…CNQKDGSHEI (124 aa)) are disordered. At Thr666 the chain carries Phosphothreonine. Polar residues-rich tracts occupy residues 673–686 (PQAQ…GKTS) and 704–722 (LSSS…STRF). 2 stretches are compositionally biased toward acidic residues: residues 730-739 (SSDEEDEDER) and 753-763 (SDSDIIFDNED). Residues 775-784 (CNQKDGSHEI) are compositionally biased toward basic and acidic residues. Asp846 (proton acceptor) is an active-site residue. Thr869 carries the post-translational modification Phosphothreonine. 2 positions are modified to phosphothreonine; by autocatalysis: Thr898 and Thr903. Positions 1021–1492 (IDGKAYRTMM…DHVMQKLRTK (472 aa)) are histidyl-tRNA synthetase-like. Lys1258 bears the N6-acetyllysine mark.

Belongs to the protein kinase superfamily. Ser/Thr protein kinase family. GCN2 subfamily. As to quaternary structure, homodimer; homodimerization is important for kinase activation by uncharged tRNAs. Interacts with GCN1; this interaction stimulates EIF2AK4/GCN2 kinase activity and is impaired by IMPACT upon a variety of stress conditions, such as amino acid depletion, UV-C irradiation, proteasome inhibitor treatment and glucose deprivation. Interacts with DNAJC3; this interaction inhibits EIF2AK4/GCN2 kinase activity during endoplasmic reticulum (ER), hypothermic and amino acid-starving stress conditions. Interacts with MAP3K20; activates EIF2AK4/GCN2 kinase activity in response to moderate ribotoxic stress. Post-translationally, autophosphorylated; autophosphorylation on Thr-898 is increased upon amino acid starvation and in UV irradiation cells and inhibited in presence of IMPACT. As to expression, expressed in liver. Expressed predominantly in the hippocampal CA1 region and the dentate gyrus, and to a lesser degree in CA3 (at protein level). Expressed in liver, lung, brain, kidney, skeletal muscle and testis. Expressed weakly in heart and spleen. Expressed in the hippocampal CA1 and CA3 regions, the dentate gyrus and cerebellum. Isoform 1 is widely expressed. Isoform 1 is expressed in brain, liver, skeletal muscle and testis. Isoform 3 is expressed in lung, brain, testis, prostate and choroid plexus. Isoform 4 is expressed in muscle, lung, kidney, brain, testis and prostate.

The protein localises to the cytoplasm. The enzyme catalyses L-seryl-[protein] + ATP = O-phospho-L-seryl-[protein] + ADP + H(+). It carries out the reaction L-threonyl-[protein] + ATP = O-phospho-L-threonyl-[protein] + ADP + H(+). (Microbial infection) Kinase activity is enhanced by alphavirus genomic RNA sequences. Kinase activity is stimulated upon binding to uncharged tRNAs. Activated by serum starvation (in vitro). In terms of biological role, metabolic-stress sensing protein kinase that phosphorylates the alpha subunit of eukaryotic translation initiation factor 2 (EIF2S1/eIF-2-alpha) in response to low amino acid availability. Plays a role as an activator of the integrated stress response (ISR) required for adaptation to amino acid starvation. EIF2S1/eIF-2-alpha phosphorylation in response to stress converts EIF2S1/eIF-2-alpha into a global protein synthesis inhibitor, leading to a global attenuation of cap-dependent translation, and thus to a reduced overall utilization of amino acids, while concomitantly initiating the preferential translation of ISR-specific mRNAs, such as the transcriptional activator ATF4, and hence allowing ATF4-mediated reprogramming of amino acid biosynthetic gene expression to alleviate nutrient depletion. Required for the translational induction of protein kinase PRKCH following amino acid starvation. Binds uncharged tRNAs. Involved in cell cycle arrest by promoting cyclin D1 mRNA translation repression after the unfolded protein response pathway (UPR) activation or cell cycle inhibitor CDKN1A/p21 mRNA translation activation in response to amino acid deprivation. Plays a role in the consolidation of synaptic plasticity, learning as well as formation of long-term memory. Plays a role in neurite outgrowth inhibition. Plays a role in feeding behavior to maintain amino acid homeostasis; contributes to the innate aversion toward diets of imbalanced amino acid composition. Plays a proapoptotic role in response to glucose deprivation. Promotes global cellular protein synthesis repression in response to UV irradiation independently of the stress-activated protein kinase/c-Jun N-terminal kinase (SAPK/JNK) and p38 MAPK signaling pathways. Functionally, (Microbial infection) Plays a role in the antiviral response against alphavirus infection; impairs early viral mRNA translation of the incoming genomic virus RNA, thus preventing alphavirus replication. (Microbial infection) Plays a role in modulating the adaptive immune response to Yellow fever virus infection; promotes dendritic cells to initiate autophagy and antigene presentation to both CD4(+) and CD8(+) T-cells under amino acid starvation. This chain is eIF-2-alpha kinase GCN2, found in Mus musculus (Mouse).